A 238-amino-acid polypeptide reads, in one-letter code: Lactate utilization protein A (238 aa).

Belongs to the LutA/YkgE family.

Its function is as follows. Is involved in L-lactate degradation and allows cells to grow with lactate as the sole carbon source. This is Lactate utilization protein A from Bacillus pumilus (strain SAFR-032).